We begin with the raw amino-acid sequence, 237 residues long: Urease subunit alpha (237 aa).

A urease gamma region spans residues 1–102; the sequence is MKLTPKELDK…LVTIHTPVED (102 aa). A urease beta region spans residues 103 to 237; it reads NGKLAPGEVF…CGCEATKDKQ (135 aa).

It in the N-terminal section; belongs to the urease gamma subunit family. This sequence in the C-terminal section; belongs to the urease beta subunit family. In terms of assembly, heterohexamer of 3 UreA (alpha) and 3 UreB (beta) subunits.

The protein resides in the cytoplasm. It carries out the reaction urea + 2 H2O + H(+) = hydrogencarbonate + 2 NH4(+). It participates in nitrogen metabolism; urea degradation; CO(2) and NH(3) from urea (urease route): step 1/1. The protein is Urease subunit alpha of Helicobacter felis.